Here is a 525-residue protein sequence, read N- to C-terminus: Zinc finger C2HC domain-containing protein 1C (525 aa).

Positions 23–34 (AHGLHSAKHDPY) are enriched in basic and acidic residues. Disordered regions lie at residues 23-48 (AHGLHSAKHDPYEQSDSPQRSSMGHL), 85-107 (CPHSAGISQQGSGNNAQGQGKGL), and 145-171 (VHRKSHSTSETGIDGDQNGYPRLPDSS). The segment covering 36–48 (QSDSPQRSSMGHL) has biased composition (polar residues). Over residues 90–102 (GISQQGSGNNAQG) the composition is skewed to low complexity. Residues 207–252 (TQIQRLEAAGESLQKEIRRKEILLREKLKKTEEGLRRIQREKKQAI) adopt a coiled-coil conformation. Disordered stretches follow at residues 292-316 (SRNRGEDQTCEQAQENSSPLQLSDY), 330-349 (NNKIRDRDSGPSAGTFSQPA), and 356-379 (LQASSLSGTPGSSGSSSSTEEQEL). Residues 301–312 (CEQAQENSSPLQ) show a composition bias toward polar residues. Low complexity predominate over residues 359–373 (SSLSGTPGSSGSSSS). C2HC/C3H-type zinc fingers lie at residues 378–407 (ELGKCSHCGRSFLSLRLQRHSTVCGKMQGS) and 487–516 (DYVQCPHCSRHFAPKVAERHIPKCKTIKNR). Zn(2+) contacts are provided by Cys382, Cys385, His397, Cys401, Cys491, Cys494, His506, and Cys510.

It belongs to the ZC2HC1 family. Zn(2+) is required as a cofactor.

This is Zinc finger C2HC domain-containing protein 1C (Zc2hc1c) from Rattus norvegicus (Rat).